We begin with the raw amino-acid sequence, 367 residues long: ABI gene family member 3 (367 aa).

Residues 36-64 (CEDNYLQATDKRKALEETMAFTTQALASV) are a coiled coil. A disordered region spans residues 163-273 (LSRTGTLSRK…LEVSQPPLEA (111 aa)). Residues 206 to 225 (SAASSASSLASAGSAEGASG) are compositionally biased toward low complexity. Phosphoserine is present on residues serine 216 and serine 219. The span at 236 to 264 (ATPPPPPVAPVTPPPPPLSAEVFLPPPPL) shows a compositional bias: pro residues. Positions 309 to 367 (SYLEKVVTLYPYTRQKDNELSFSEGTVICVTRRYSDGWCEGVSSEGTGFFPGNYVEPSC) constitute an SH3 domain. Serine 343 carries the phosphoserine modification.

This sequence belongs to the ABI family. May interact with PAK1 and PAK2. Probably interacts with TARSH.

It localises to the cytoplasm. Inhibits ectopic tumor cell metastasis of SRD cells. In vitro, reduces cell motility. The sequence is that of ABI gene family member 3 (Abi3) from Mus musculus (Mouse).